We begin with the raw amino-acid sequence, 142 residues long: Hemoglobin subunit alpha (142 aa).

Positions Val1–Arg142 constitute a Globin domain. Ser3 is modified (phosphoserine). Lys7 and Lys11 each carry N6-succinyllysine. N6-acetyllysine; alternate is present on Lys16. Lys16 bears the N6-succinyllysine; alternate mark. Phosphotyrosine is present on Tyr24. Residue Ser35 is modified to Phosphoserine. The residue at position 40 (Lys40) is an N6-succinyllysine. His58 serves as a coordination point for O2. Position 87 (His87) interacts with heme b. Ser102 is modified (phosphoserine). Thr108 carries the phosphothreonine modification. Ser125 is modified (phosphoserine). Phosphothreonine occurs at positions 135 and 138. Ser139 is subject to Phosphoserine.

Belongs to the globin family. Heterotetramer of two alpha chains and two beta chains. In terms of tissue distribution, red blood cells.

Involved in oxygen transport from the lung to the various peripheral tissues. In terms of biological role, hemopressin acts as an antagonist peptide of the cannabinoid receptor CNR1. Hemopressin-binding efficiently blocks cannabinoid receptor CNR1 and subsequent signaling. The chain is Hemoglobin subunit alpha (HBA) from Procavia capensis habessinica (Abyssinian hyrax).